Here is a 251-residue protein sequence, read N- to C-terminus: Aspartate/glutamate leucyltransferase (251 aa).

This sequence belongs to the R-transferase family. Bpt subfamily.

It is found in the cytoplasm. The catalysed reaction is N-terminal L-glutamyl-[protein] + L-leucyl-tRNA(Leu) = N-terminal L-leucyl-L-glutamyl-[protein] + tRNA(Leu) + H(+). It carries out the reaction N-terminal L-aspartyl-[protein] + L-leucyl-tRNA(Leu) = N-terminal L-leucyl-L-aspartyl-[protein] + tRNA(Leu) + H(+). Functions in the N-end rule pathway of protein degradation where it conjugates Leu from its aminoacyl-tRNA to the N-termini of proteins containing an N-terminal aspartate or glutamate. The protein is Aspartate/glutamate leucyltransferase of Xanthomonas oryzae pv. oryzae (strain KACC10331 / KXO85).